The following is a 217-amino-acid chain: Protein GrpE (217 aa).

3 stretches are compositionally biased toward acidic residues: residues M1–D28, D136–T152, and S204–E217. Disordered stretches follow at residues M1–A44, D135–K157, and Q193–E217.

It belongs to the GrpE family. Homodimer.

The protein resides in the cytoplasm. Participates actively in the response to hyperosmotic and heat shock by preventing the aggregation of stress-denatured proteins, in association with DnaK and GrpE. It is the nucleotide exchange factor for DnaK and may function as a thermosensor. Unfolded proteins bind initially to DnaJ; upon interaction with the DnaJ-bound protein, DnaK hydrolyzes its bound ATP, resulting in the formation of a stable complex. GrpE releases ADP from DnaK; ATP binding to DnaK triggers the release of the substrate protein, thus completing the reaction cycle. Several rounds of ATP-dependent interactions between DnaJ, DnaK and GrpE are required for fully efficient folding. The chain is Protein GrpE from Natronomonas pharaonis (strain ATCC 35678 / DSM 2160 / CIP 103997 / JCM 8858 / NBRC 14720 / NCIMB 2260 / Gabara) (Halobacterium pharaonis).